Here is a 184-residue protein sequence, read N- to C-terminus: MPIDAWVREEVEIPEGVEVTIERNVVKVRGPKGELERELKYPGVQIFTEDGKVVIYKEFPRKKDIAIARTFKAHIANMIKGVTEGFTYKLKVVYSHFPMTVKVQGDEVVIENFLGEKNPRRAKILPGVTVKVMGSEVIVEGIDKEAVGQTAANIEQATRITKWDRRVFQDGIYIVEKAGKPIKF.

The protein belongs to the universal ribosomal protein uL6 family. In terms of assembly, part of the 50S ribosomal subunit.

This protein binds to the 23S rRNA, and is important in its secondary structure. It is located near the subunit interface in the base of the L7/L12 stalk, and near the tRNA binding site of the peptidyltransferase center. The chain is Large ribosomal subunit protein uL6 from Thermococcus onnurineus (strain NA1).